The sequence spans 293 residues: Glutamyl-Q tRNA(Asp) synthetase (293 aa).

L-glutamate contacts are provided by residues 4-8 (RYAPS) and Glu-40. A 'HIGH' region motif is present at residues 7–17 (PSPSGDLHFGN). Zn(2+) is bound by residues Cys-92, Cys-94, Tyr-113, and Cys-117. Residues Tyr-180 and Arg-198 each coordinate L-glutamate. Residues 236–240 (RLAKR) carry the 'KMSKS' region motif. ATP is bound at residue Lys-239.

Belongs to the class-I aminoacyl-tRNA synthetase family. GluQ subfamily. Requires Zn(2+) as cofactor.

In terms of biological role, catalyzes the tRNA-independent activation of glutamate in presence of ATP and the subsequent transfer of glutamate onto a tRNA(Asp). Glutamate is transferred on the 2-amino-5-(4,5-dihydroxy-2-cyclopenten-1-yl) moiety of the queuosine in the wobble position of the QUC anticodon. This is Glutamyl-Q tRNA(Asp) synthetase from Corynebacterium glutamicum (strain ATCC 13032 / DSM 20300 / JCM 1318 / BCRC 11384 / CCUG 27702 / LMG 3730 / NBRC 12168 / NCIMB 10025 / NRRL B-2784 / 534).